The primary structure comprises 473 residues: Tubulin gamma chain (473 aa).

The disordered stretch occupies residues T33–E56. Residues S43 to E56 show a composition bias toward basic and acidic residues. A143 to G149 lines the GTP pocket.

Belongs to the tubulin family. In terms of assembly, interacts with SPC72, SPC97 and SPC98.

It localises to the cytoplasm. The protein resides in the cytoskeleton. Its subcellular location is the microtubule organizing center. The protein localises to the spindle pole body. Functionally, tubulin is the major constituent of microtubules. The gamma chain is found at microtubule organizing centers (MTOC) such as the spindle poles or the centrosome, suggesting that it is involved in the minus-end nucleation of microtubule assembly. TUB4 is an important spindle pole body component that organizes both cytoplasmic and nuclear microtubule arrays. The protein is Tubulin gamma chain (TUB4) of Saccharomyces cerevisiae (strain ATCC 204508 / S288c) (Baker's yeast).